The sequence spans 180 residues: Translation initiation factor IF-3 (180 aa).

The protein belongs to the IF-3 family. In terms of assembly, monomer.

It localises to the cytoplasm. IF-3 binds to the 30S ribosomal subunit and shifts the equilibrium between 70S ribosomes and their 50S and 30S subunits in favor of the free subunits, thus enhancing the availability of 30S subunits on which protein synthesis initiation begins. In Caldanaerobacter subterraneus subsp. tengcongensis (strain DSM 15242 / JCM 11007 / NBRC 100824 / MB4) (Thermoanaerobacter tengcongensis), this protein is Translation initiation factor IF-3.